We begin with the raw amino-acid sequence, 194 residues long: UPF0301 protein FTM_0963 (194 aa).

It belongs to the UPF0301 (AlgH) family.

The chain is UPF0301 protein FTM_0963 from Francisella tularensis subsp. mediasiatica (strain FSC147).